Here is a 356-residue protein sequence, read N- to C-terminus: 4-hydroxybenzoate polyprenyltransferase, mitochondrial (356 aa).

A mitochondrion-targeting transit peptide spans 1–44; the sequence is MITRSIGIARRSNSINCIVGSNTSTSYSLDESTKRWISTSTKQP. The next 6 helical transmembrane spans lie at 71-91, 93-113, 150-170, 195-215, 269-289, and 332-352; these read VDKP…IAMA, PAGQ…AFLM, AIGL…QLNW, WPQF…WCAL, WLSA…IASD, and IILF…QILI.

The protein belongs to the UbiA prenyltransferase family. Mg(2+) serves as cofactor.

It localises to the mitochondrion inner membrane. It catalyses the reaction an all-trans-polyprenyl diphosphate + 4-hydroxybenzoate = a 4-hydroxy-3-(all-trans-polyprenyl)benzoate + diphosphate. It participates in cofactor biosynthesis; ubiquinone biosynthesis. Its function is as follows. Catalyzes the prenylation of para-hydroxybenzoate (PHB) with an all-trans polyprenyl group. Mediates the second step in the final reaction sequence of coenzyme Q (CoQ) biosynthesis, which is the condensation of the polyisoprenoid side chain with PHB, generating the first membrane-bound Q intermediate. The chain is 4-hydroxybenzoate polyprenyltransferase, mitochondrial (coq-2) from Caenorhabditis elegans.